The sequence spans 282 residues: Cuticle collagen 8 (282 aa).

The N-terminal stretch at 1-24 (MLVCVFVALYTMMGLLTDIKQLQS) is a signal peptide. Residues 86-282 (GPKSEGCPAG…CPCPGRSYKA (197 aa)) are disordered. Triple-helical region regions lie at residues 95–124 (GPPG…PGVI) and 141–269 (GRPG…PGPD). Gly residues predominate over residues 170 to 180 (TGGQGGPGEQG). Residues 214–224 (PPGPRGPPGPE) show a composition bias toward pro residues. A compositionally biased stretch (gly residues) spans 225–234 (GNPGGAGEDG). Residues 235-244 (NQGPVGHPGV) show a composition bias toward low complexity.

Belongs to the cuticular collagen family. As to quaternary structure, collagen polypeptide chains are complexed within the cuticle by disulfide bonds and other types of covalent cross-links.

In terms of biological role, nematode cuticles are composed largely of collagen-like proteins. The cuticle functions both as an exoskeleton and as a barrier to protect the worm from its environment. This Caenorhabditis elegans protein is Cuticle collagen 8 (col-8).